The following is an 86-amino-acid chain: Cytochrome c oxidase subunit 12, mitochondrial (86 aa).

The 44-residue stretch at 30-73 folds into the CHCH domain; sequence TKHCFQSYIDYFRCIKAKGEDFVPCKQFWHAYQSLCPMEWVERW. The Cx9C motif signature appears at 33–43; it reads CFQSYIDYFRC. Disulfide bonds link C33-C65 and C43-C54. A Cx10C motif motif is present at residues 54 to 65; that stretch reads CKQFWHAYQSLC.

Belongs to the cytochrome c oxidase subunit 6B family. Component of the cytochrome c oxidase (complex IV, CIV), a multisubunit enzyme composed of a catalytic core of 3 subunits and several supernumerary subunits. The complex exists as a monomer or a dimer and forms supercomplexes (SCs) in the inner mitochondrial membrane with ubiquinol-cytochrome c oxidoreductase (cytochrome b-c1 complex, complex III, CIII).

It is found in the mitochondrion inner membrane. It functions in the pathway energy metabolism; oxidative phosphorylation. Its function is as follows. Component of the cytochrome c oxidase, the last enzyme in the mitochondrial electron transport chain which drives oxidative phosphorylation. The respiratory chain contains 3 multisubunit complexes succinate dehydrogenase (complex II, CII), ubiquinol-cytochrome c oxidoreductase (cytochrome b-c1 complex, complex III, CIII) and cytochrome c oxidase (complex IV, CIV), that cooperate to transfer electrons derived from NADH and succinate to molecular oxygen, creating an electrochemical gradient over the inner membrane that drives transmembrane transport and the ATP synthase. Cytochrome c oxidase is the component of the respiratory chain that catalyzes the reduction of oxygen to water. Electrons originating from reduced cytochrome c in the intermembrane space (IMS) are transferred via the dinuclear copper A center (CU(A)) of subunit 2 and heme A of subunit 1 to the active site in subunit 1, a binuclear center (BNC) formed by heme A3 and copper B (CU(B)). The BNC reduces molecular oxygen to 2 water molecules using 4 electrons from cytochrome c in the IMS and 4 protons from the mitochondrial matrix. This chain is Cytochrome c oxidase subunit 12, mitochondrial (cox12), found in Schizosaccharomyces pombe (strain 972 / ATCC 24843) (Fission yeast).